The primary structure comprises 145 residues: Pseudoazurin (145 aa).

An N-terminal signal peptide occupies residues 1 to 22 (MFHHSLAAAAAALLALAAPGFA). In terms of domain architecture, Plastocyanin-like spans 27–115 (VHMLNKGESG…MGMVGLVQVG (89 aa)). Histidine 62, cysteine 100, histidine 103, and methionine 108 together coordinate Cu cation. The segment at 126–145 (TAKMPKKARERMDAELAQVN) is disordered.

In terms of assembly, homodimer. Cu cation serves as cofactor.

The protein localises to the periplasm. Its function is as follows. This soluble electron transfer copper protein is required for the inactivation of copper-containing nitrite reductase in the presence of oxygen. This is Pseudoazurin (pazS) from Paracoccus pantotrophus (Thiosphaera pantotropha).